The sequence spans 515 residues: Bifunctional purine biosynthesis protein PurH (515 aa).

Residues 1–145 (MTKRALISVS…KNHASVTVVV (145 aa)) form the MGS-like domain.

This sequence belongs to the PurH family.

It carries out the reaction (6R)-10-formyltetrahydrofolate + 5-amino-1-(5-phospho-beta-D-ribosyl)imidazole-4-carboxamide = 5-formamido-1-(5-phospho-D-ribosyl)imidazole-4-carboxamide + (6S)-5,6,7,8-tetrahydrofolate. The enzyme catalyses IMP + H2O = 5-formamido-1-(5-phospho-D-ribosyl)imidazole-4-carboxamide. The protein operates within purine metabolism; IMP biosynthesis via de novo pathway; 5-formamido-1-(5-phospho-D-ribosyl)imidazole-4-carboxamide from 5-amino-1-(5-phospho-D-ribosyl)imidazole-4-carboxamide (10-formyl THF route): step 1/1. It participates in purine metabolism; IMP biosynthesis via de novo pathway; IMP from 5-formamido-1-(5-phospho-D-ribosyl)imidazole-4-carboxamide: step 1/1. This chain is Bifunctional purine biosynthesis protein PurH, found in Streptococcus pyogenes serotype M18 (strain MGAS8232).